Here is a 458-residue protein sequence, read N- to C-terminus: F-box/WD repeat-containing protein 9 (458 aa).

At methionine 1 the chain carries N-acetylmethionine. Residues 1–28 form a disordered region; the sequence is MELPPGPRDDPHAWDDDSDPELEPDTDA. The span at 16 to 28 shows a compositional bias: acidic residues; sequence DDSDPELEPDTDA. 2 positions are modified to phosphoserine: serine 18 and serine 59. The F-box domain occupies 76–123; the sequence is VPGLLSLPPELLLEICAYLDARLVLHVLPRVCHALRDLVRDRVTWRLR. WD repeat units lie at residues 171–210, 224–261, 264–301, 305–342, 344–381, 387–424, and 427–458; these read GHFA…VEPS, THKG…QQFG, KGKA…ALLK, LHSS…VLQR, QLDS…FQLV, GHRS…RTIC, and SHHN…RLQA.

Interacts with SKP1 and CUL1.

Functionally, substrate-recognition component of the SCF (SKP1-CUL1-F-box protein)-type E3 ubiquitin ligase complex. The polypeptide is F-box/WD repeat-containing protein 9 (FBXW9) (Bos taurus (Bovine)).